The chain runs to 308 residues: Phenylcoumaran benzylic ether reductase Pyrc5 (308 aa).

Residues 11-17 (GGTGYIG), arginine 36, and lysine 45 contribute to the NADP(+) site. Lysine 133 (proton acceptor) is an active-site residue. NADP(+) is bound at residue arginine 137.

It belongs to the NmrA-type oxidoreductase family. Isoflavone reductase subfamily.

The catalysed reaction is (-)-dehydrodiconiferyl alcohol + NADPH + H(+) = (S)-isodihydrodehydrodiconiferyl alcohol + NADP(+). It catalyses the reaction (+)-dehydrodiconiferyl alcohol + NADPH + H(+) = (R)-isodihydrodehydrodiconiferyl alcohol + NADP(+). In terms of biological role, oxidoreductase involved in lignan biosynthesis. Catalyzes the NADPH-dependent reduction of phenylcoumaran benzylic ethers. Converts dehydrodiconiferyl alcohol (DDC) to isodihydrodehydrodiconiferyl alcohol (IDDDC). The sequence is that of Phenylcoumaran benzylic ether reductase Pyrc5 from Pyrus communis (Pear).